The sequence spans 396 residues: 1-deoxy-D-xylulose 5-phosphate reductoisomerase (396 aa).

NADPH is bound by residues T10, G11, S12, I13, G36, K37, N38, and N124. K125 lines the 1-deoxy-D-xylulose 5-phosphate pocket. E126 is a binding site for NADPH. Residue D150 participates in Mn(2+) binding. 1-deoxy-D-xylulose 5-phosphate contacts are provided by S151, E152, S186, and H209. E152 serves as a coordination point for Mn(2+). G215 is an NADPH binding site. 1-deoxy-D-xylulose 5-phosphate contacts are provided by S222, N227, K228, and E231. E231 lines the Mn(2+) pocket.

The protein belongs to the DXR family. Mg(2+) serves as cofactor. Requires Mn(2+) as cofactor.

It catalyses the reaction 2-C-methyl-D-erythritol 4-phosphate + NADP(+) = 1-deoxy-D-xylulose 5-phosphate + NADPH + H(+). It participates in isoprenoid biosynthesis; isopentenyl diphosphate biosynthesis via DXP pathway; isopentenyl diphosphate from 1-deoxy-D-xylulose 5-phosphate: step 1/6. Functionally, catalyzes the NADPH-dependent rearrangement and reduction of 1-deoxy-D-xylulose-5-phosphate (DXP) to 2-C-methyl-D-erythritol 4-phosphate (MEP). The chain is 1-deoxy-D-xylulose 5-phosphate reductoisomerase from Actinobacillus pleuropneumoniae serotype 3 (strain JL03).